The following is a 69-amino-acid chain: Beta-defensin 11 (69 aa).

Positions 1–23 (MRTLCSLLLIGCLLFSYDTPVVG) are cleaved as a signal peptide. Cystine bridges form between Cys-35–Cys-64, Cys-42–Cys-57, and Cys-47–Cys-65.

This sequence belongs to the beta-defensin family.

The protein localises to the secreted. Functionally, has antibacterial activity. This is Beta-defensin 11 (Defb11) from Rattus norvegicus (Rat).